Here is a 523-residue protein sequence, read N- to C-terminus: Glutamate--cysteine ligase (523 aa).

Belongs to the glutamate--cysteine ligase type 1 family. Type 1 subfamily.

It carries out the reaction L-cysteine + L-glutamate + ATP = gamma-L-glutamyl-L-cysteine + ADP + phosphate + H(+). It functions in the pathway sulfur metabolism; glutathione biosynthesis; glutathione from L-cysteine and L-glutamate: step 1/2. The sequence is that of Glutamate--cysteine ligase from Baumannia cicadellinicola subsp. Homalodisca coagulata.